Here is a 125-residue protein sequence, read N- to C-terminus: RxLR effector protein Avh6 (125 aa).

An N-terminal signal peptide occupies residues 1–25 (MRLSSTTFVVLAAVLLASGTAVSKA). The short motif at 48–70 (RFLRSHHTEDGKAKLSNYDNEER) is the RxLR-dEER element.

The protein belongs to the RxLR effector family.

Its subcellular location is the secreted. The protein localises to the host cell. In terms of biological role, effector that suppresses plant defense responses during the early stages of pathogen infection. Suppresses cell death induced by effectors and PAMPs in plant hosts. Triggers a hypersensitive response (HR) in the presence of Rps1d. Suppresses BAX-induced cell death and enhanced P.capsici infection in Nicotiana benthamiana. Also suppresses effector-triggered immunity induction by associating with Avr1b and Rps1b, suggesting a role in suppressing plant immunity. The polypeptide is RxLR effector protein Avh6 (Phytophthora sojae (Soybean stem and root rot agent)).